The sequence spans 95 residues: Late cornified envelope protein 3B (95 aa).

The span at 1-13 (MSCQQNQQQCQPL) shows a compositional bias: low complexity. 2 disordered regions span residues 1–29 (MSCQ…SAQC) and 68–95 (RQSS…GGCC).

This sequence belongs to the LCE family. Skin-specific. Expression was readily detected in adult trunk skin, adult arm skin, fetal skin, penal skin, vulva, esophagus and tongue. Not expressed in the cervix, rectum, lung, colon, or placenta.

A structural component of the cornified envelope of the stratum corneum involved in innate cutaneous host defense. Possesses defensin-like antimicrobial activity against a broad spectrum of Gram-positive and Gram-negative bacteria, both aerobic and anaerobic species. Upon inflammation, may regulate skin barrier repair by shaping cutaneous microbiota composition and immune response to bacterial antigens. This Homo sapiens (Human) protein is Late cornified envelope protein 3B.